Consider the following 277-residue polypeptide: Kallikrein-13 (277 aa).

The N-terminal stretch at 1–16 is a signal peptide; that stretch reads MWPLALVIASLTLALS. Asn30 is a glycosylation site (N-linked (GlcNAc...) asparagine). In terms of domain architecture, Peptidase S1 spans 36–263; the sequence is LPGGYTCFPH…YVLWIRETIR (228 aa). Intrachain disulfides connect Cys42-Cys178, Cys61-Cys77, Cys157-Cys224, Cys189-Cys203, and Cys214-Cys239. Active-site charge relay system residues include His76 and Asp124. Catalysis depends on Ser218, which acts as the Charge relay system. Asn225 carries an N-linked (GlcNAc...) asparagine glycan.

The protein belongs to the peptidase S1 family. Kallikrein subfamily. In terms of tissue distribution, expressed in prostate, breast, testis and salivary gland.

The protein localises to the secreted. In Homo sapiens (Human), this protein is Kallikrein-13 (KLK13).